The following is a 516-amino-acid chain: Homeobox protein 6 (516 aa).

Positions 22-31 are enriched in low complexity; the sequence is NYDFDNKNNS. Disordered regions lie at residues 22–140, 200–256, and 268–348; these read NYDF…PNCN, SLNN…SSPS, and DEND…NNGD. Residues 32–41 are compositionally biased toward gly residues; sequence IGGGGGGGGS. Composition is skewed to low complexity over residues 42 to 59, 66 to 78, and 101 to 132; these read SSSRSSSSRSSSNRSSSG, SNSSSSINNIINS, and TTTTTTTTTTTTTTTTTKNENISSSESENSSS. Residues 284–346 are compositionally biased toward low complexity; that stretch reads NNNNNNNNNN…NNNNTNTNNN (63 aa). 2 consecutive DNA-binding regions (homeobox) follow at residues 362-421 and 424-483; these read KSGQ…SKSG and SYAK…NKLS. A disordered region spans residues 483–516; that stretch reads SSKAIQDKDNQDNDNNNSNNNENNDDSYSDEGLF. A compositionally biased stretch (low complexity) spans 495–504; sequence NDNNNSNNNE. Positions 505 to 516 are enriched in acidic residues; that stretch reads NNDDSYSDEGLF.

Its subcellular location is the nucleus. In terms of biological role, putative transcription factor. The protein is Homeobox protein 6 (hbx6) of Dictyostelium discoideum (Social amoeba).